A 271-amino-acid polypeptide reads, in one-letter code: Urease accessory protein UreD (271 aa).

The protein belongs to the UreD family. In terms of assembly, ureD, UreF and UreG form a complex that acts as a GTP-hydrolysis-dependent molecular chaperone, activating the urease apoprotein by helping to assemble the nickel containing metallocenter of UreC. The UreE protein probably delivers the nickel.

Its subcellular location is the cytoplasm. In terms of biological role, required for maturation of urease via the functional incorporation of the urease nickel metallocenter. In Halalkalibacterium halodurans (strain ATCC BAA-125 / DSM 18197 / FERM 7344 / JCM 9153 / C-125) (Bacillus halodurans), this protein is Urease accessory protein UreD.